We begin with the raw amino-acid sequence, 231 residues long: ABC transporter ATP-binding protein YtrE (231 aa).

The region spanning 4-231 (VQHIDHSFTI…VLKGGITVEV (228 aa)) is the ABC transporter domain. 42-49 (GRSGSGKS) provides a ligand contact to ATP.

It belongs to the ABC transporter superfamily. As to quaternary structure, the complex is composed of 2 ATP-binding proteins (YtrB and YtrE), 2 transmembrane proteins (YtrC and YtrD) and a solute-binding protein (YtrF).

The protein resides in the cell membrane. In terms of biological role, part of the ABC transporter complex YtrBCDEF that plays a role in acetoin utilization during stationary phase and sporulation. This is ABC transporter ATP-binding protein YtrE (ytrE) from Bacillus subtilis (strain 168).